The sequence spans 393 residues: NAD(P)H-quinone oxidoreductase subunit H, chloroplastic (393 aa).

Belongs to the complex I 49 kDa subunit family. NDH is composed of at least 16 different subunits, 5 of which are encoded in the nucleus.

The protein localises to the plastid. Its subcellular location is the chloroplast thylakoid membrane. It catalyses the reaction a plastoquinone + NADH + (n+1) H(+)(in) = a plastoquinol + NAD(+) + n H(+)(out). The catalysed reaction is a plastoquinone + NADPH + (n+1) H(+)(in) = a plastoquinol + NADP(+) + n H(+)(out). Its function is as follows. NDH shuttles electrons from NAD(P)H:plastoquinone, via FMN and iron-sulfur (Fe-S) centers, to quinones in the photosynthetic chain and possibly in a chloroplast respiratory chain. The immediate electron acceptor for the enzyme in this species is believed to be plastoquinone. Couples the redox reaction to proton translocation, and thus conserves the redox energy in a proton gradient. This Zygnema circumcarinatum (Green alga) protein is NAD(P)H-quinone oxidoreductase subunit H, chloroplastic.